Consider the following 124-residue polypeptide: Small ribosomal subunit protein uS12 (124 aa).

Position 89 is a 3-methylthioaspartic acid (Asp-89).

It belongs to the universal ribosomal protein uS12 family. As to quaternary structure, part of the 30S ribosomal subunit. Contacts proteins S8 and S17. May interact with IF1 in the 30S initiation complex.

In terms of biological role, with S4 and S5 plays an important role in translational accuracy. Interacts with and stabilizes bases of the 16S rRNA that are involved in tRNA selection in the A site and with the mRNA backbone. Located at the interface of the 30S and 50S subunits, it traverses the body of the 30S subunit contacting proteins on the other side and probably holding the rRNA structure together. The combined cluster of proteins S8, S12 and S17 appears to hold together the shoulder and platform of the 30S subunit. In Psychrobacter arcticus (strain DSM 17307 / VKM B-2377 / 273-4), this protein is Small ribosomal subunit protein uS12.